The primary structure comprises 432 residues: Gamma-glutamyl phosphate reductase (432 aa).

It belongs to the gamma-glutamyl phosphate reductase family.

The protein localises to the cytoplasm. The catalysed reaction is L-glutamate 5-semialdehyde + phosphate + NADP(+) = L-glutamyl 5-phosphate + NADPH + H(+). It functions in the pathway amino-acid biosynthesis; L-proline biosynthesis; L-glutamate 5-semialdehyde from L-glutamate: step 2/2. Its function is as follows. Catalyzes the NADPH-dependent reduction of L-glutamate 5-phosphate into L-glutamate 5-semialdehyde and phosphate. The product spontaneously undergoes cyclization to form 1-pyrroline-5-carboxylate. The sequence is that of Gamma-glutamyl phosphate reductase from Methylorubrum extorquens (strain PA1) (Methylobacterium extorquens).